The primary structure comprises 363 residues: Molybdenum import ATP-binding protein ModC (363 aa).

An ABC transporter domain is found at 1 to 232 (MLDLDLRRRQ…PGLRPLTGRY (232 aa)). 30–37 (GRSGSGKT) contributes to the ATP binding site. In terms of domain architecture, Mop spans 292 to 358 (RVSIRNVLPA…IKALTIARGD (67 aa)).

The protein belongs to the ABC transporter superfamily. Molybdate importer (TC 3.A.1.8) family. The complex is composed of two ATP-binding proteins (ModC), two transmembrane proteins (ModB) and a solute-binding protein (ModA).

The protein resides in the cell inner membrane. The catalysed reaction is molybdate(out) + ATP + H2O = molybdate(in) + ADP + phosphate + H(+). Its function is as follows. Part of the ABC transporter complex ModABC involved in molybdenum import. Responsible for energy coupling to the transport system. This chain is Molybdenum import ATP-binding protein ModC, found in Paramagnetospirillum magneticum (strain ATCC 700264 / AMB-1) (Magnetospirillum magneticum).